We begin with the raw amino-acid sequence, 284 residues long: Proteasome subunit beta 1 (284 aa).

Residues 1–54 (MAQRDTGGRLGAEFFTPGDSSFTAFLAAHRPALLSTRGLLPDGVRAAPDRVPHG) constitute a propeptide, removed in mature form; by autocatalysis. Residue threonine 55 is the Nucleophile of the active site. Basic and acidic residues predominate over residues 256-277 (RLPESETEDLSREMVEQRHTRP). The segment at 256–284 (RLPESETEDLSREMVEQRHTRPDGPTAAM) is disordered.

Belongs to the peptidase T1B family. As to quaternary structure, the 20S proteasome core is composed of 14 alpha and 14 beta subunits that assemble into four stacked heptameric rings, resulting in a barrel-shaped structure. The two inner rings, each composed of seven catalytic beta subunits, are sandwiched by two outer rings, each composed of seven alpha subunits. The catalytic chamber with the active sites is on the inside of the barrel. Has a gated structure, the ends of the cylinder being occluded by the N-termini of the alpha-subunits. Is capped by the proteasome-associated ATPase, ARC.

It is found in the cytoplasm. The enzyme catalyses Cleavage of peptide bonds with very broad specificity.. Its pathway is protein degradation; proteasomal Pup-dependent pathway. The formation of the proteasomal ATPase ARC-20S proteasome complex, likely via the docking of the C-termini of ARC into the intersubunit pockets in the alpha-rings, may trigger opening of the gate for substrate entry. Interconversion between the open-gate and close-gate conformations leads to a dynamic regulation of the 20S proteasome proteolysis activity. Component of the proteasome core, a large protease complex with broad specificity involved in protein degradation. This Streptomyces avermitilis (strain ATCC 31267 / DSM 46492 / JCM 5070 / NBRC 14893 / NCIMB 12804 / NRRL 8165 / MA-4680) protein is Proteasome subunit beta 1.